We begin with the raw amino-acid sequence, 265 residues long: DNA repair protein RecO (265 aa).

Belongs to the RecO family.

In terms of biological role, involved in DNA repair and RecF pathway recombination. The polypeptide is DNA repair protein RecO (Mycobacterium marinum (strain ATCC BAA-535 / M)).